The following is a 692-amino-acid chain: Highly divergent homeobox (692 aa).

The segment at residues L3–S63 is a DNA-binding region (homeobox 1). Over residues S117 to T133 the composition is skewed to polar residues. Positions S117–H136 are disordered. Glycyl lysine isopeptide (Lys-Gly) (interchain with G-Cter in SUMO2) cross-links involve residues K137, K142, K146, K165, K174, K196, K214, K223, and K234. The segment at residues A437–G500 is a DNA-binding region (homeobox 2). 2 disordered regions span residues P505–R541 and K647–L692. Positions T676–L692 are enriched in polar residues.

It localises to the nucleus. This Mus musculus (Mouse) protein is Highly divergent homeobox (Hdx).